We begin with the raw amino-acid sequence, 923 residues long: Meiotic recombination protein rec11 (923 aa).

The 88-residue stretch at 278-365 (LFSRIHDIRA…DRFSLRIVEI (88 aa)) folds into the SCD domain.

The protein is Meiotic recombination protein rec11 (rec11) of Schizosaccharomyces pombe (strain 972 / ATCC 24843) (Fission yeast).